The primary structure comprises 166 residues: UPF0561 protein C2orf68 homolog (166 aa).

A compositionally biased stretch (basic and acidic residues) spans 36–49 (RDDYDKKVKQAAKE). Residues 36–108 (RDDYDKKVKQ…EPEPPGHQLF (73 aa)) are disordered.

The protein belongs to the UPF0561 family.

This chain is UPF0561 protein C2orf68 homolog, found in Bos taurus (Bovine).